The primary structure comprises 106 residues: Large ribosomal subunit protein bL21 (106 aa).

The protein belongs to the bacterial ribosomal protein bL21 family. As to quaternary structure, part of the 50S ribosomal subunit. Contacts protein L20.

Its function is as follows. This protein binds to 23S rRNA in the presence of protein L20. This Coprothermobacter proteolyticus (strain ATCC 35245 / DSM 5265 / OCM 4 / BT) protein is Large ribosomal subunit protein bL21.